A 488-amino-acid polypeptide reads, in one-letter code: Glutamyl-tRNA(Gln) amidotransferase subunit A (488 aa).

Active-site charge relay system residues include K77 and S152. S176 serves as the catalytic Acyl-ester intermediate.

The protein belongs to the amidase family. GatA subfamily. Heterotrimer of A, B and C subunits.

The catalysed reaction is L-glutamyl-tRNA(Gln) + L-glutamine + ATP + H2O = L-glutaminyl-tRNA(Gln) + L-glutamate + ADP + phosphate + H(+). In terms of biological role, allows the formation of correctly charged Gln-tRNA(Gln) through the transamidation of misacylated Glu-tRNA(Gln) in organisms which lack glutaminyl-tRNA synthetase. The reaction takes place in the presence of glutamine and ATP through an activated gamma-phospho-Glu-tRNA(Gln). The protein is Glutamyl-tRNA(Gln) amidotransferase subunit A of Streptococcus pyogenes serotype M6 (strain ATCC BAA-946 / MGAS10394).